We begin with the raw amino-acid sequence, 155 residues long: MTEEATTTLSSADITEIMKLLPHRYPFLMVDKIIEIDGDNTAIGIKNVTVNEPHFTGHFPEAPIMPGVLLIEGMAQTAGAICAKKEGQTGNLVYFMTIENARFRKPVVPGDRVEFHVKKNKQRGNIWKFHCDAKVDGALVAEADIGAMIVRKDQA.

His58 is an active-site residue.

This sequence belongs to the thioester dehydratase family. FabZ subfamily.

The protein localises to the cytoplasm. It catalyses the reaction a (3R)-hydroxyacyl-[ACP] = a (2E)-enoyl-[ACP] + H2O. Functionally, involved in unsaturated fatty acids biosynthesis. Catalyzes the dehydration of short chain beta-hydroxyacyl-ACPs and long chain saturated and unsaturated beta-hydroxyacyl-ACPs. The protein is 3-hydroxyacyl-[acyl-carrier-protein] dehydratase FabZ of Rhizobium etli (strain ATCC 51251 / DSM 11541 / JCM 21823 / NBRC 15573 / CFN 42).